The primary structure comprises 226 residues: Leucyl/phenylalanyl-tRNA--protein transferase (226 aa).

It belongs to the L/F-transferase family.

It is found in the cytoplasm. The enzyme catalyses N-terminal L-lysyl-[protein] + L-leucyl-tRNA(Leu) = N-terminal L-leucyl-L-lysyl-[protein] + tRNA(Leu) + H(+). It catalyses the reaction N-terminal L-arginyl-[protein] + L-leucyl-tRNA(Leu) = N-terminal L-leucyl-L-arginyl-[protein] + tRNA(Leu) + H(+). It carries out the reaction L-phenylalanyl-tRNA(Phe) + an N-terminal L-alpha-aminoacyl-[protein] = an N-terminal L-phenylalanyl-L-alpha-aminoacyl-[protein] + tRNA(Phe). Its function is as follows. Functions in the N-end rule pathway of protein degradation where it conjugates Leu, Phe and, less efficiently, Met from aminoacyl-tRNAs to the N-termini of proteins containing an N-terminal arginine or lysine. The protein is Leucyl/phenylalanyl-tRNA--protein transferase of Bradyrhizobium sp. (strain ORS 278).